A 254-amino-acid chain; its full sequence is MNRRRRIYEGKAKILYEGPEPGTLIQFFKDDATAFNKKKHDVIDGKGVLNNRISEYIFTHLNKIGIPTHFIRRLNMREQLIKEVEIIPLEIVVRNVAAGSLAKRLGIEEGTVLPRSIIEFYYKADALDDPMVSEEHITAFGWASPQELDDIMALAIRINDFLSGLFLGVGIQLVDFKIECGRLYEGDMMRIILADEISPDSCRLWDVETKEKMDKDRFRRDMGGLVEAYQEVARRLGIINENEPPRGSGPVLVK.

Belongs to the SAICAR synthetase family.

It catalyses the reaction 5-amino-1-(5-phospho-D-ribosyl)imidazole-4-carboxylate + L-aspartate + ATP = (2S)-2-[5-amino-1-(5-phospho-beta-D-ribosyl)imidazole-4-carboxamido]succinate + ADP + phosphate + 2 H(+). Its pathway is purine metabolism; IMP biosynthesis via de novo pathway; 5-amino-1-(5-phospho-D-ribosyl)imidazole-4-carboxamide from 5-amino-1-(5-phospho-D-ribosyl)imidazole-4-carboxylate: step 1/2. This is Phosphoribosylaminoimidazole-succinocarboxamide synthase from Sinorhizobium fredii (strain NBRC 101917 / NGR234).